The primary structure comprises 106 residues: UPF0145 protein FTL_1249 (106 aa).

This sequence belongs to the UPF0145 family.

This Francisella tularensis subsp. holarctica (strain LVS) protein is UPF0145 protein FTL_1249.